A 92-amino-acid polypeptide reads, in one-letter code: Small cysteine and glycine repeat-containing protein 9 (92 aa).

An 11 X 2 AA repeats of CG region spans residues 4–72 (CGCGSCGCSG…CCRRTCSSCG (69 aa)).

It belongs to the KRTAP type 28 family.

Functionally, in the hair cortex, hair keratin intermediate filaments are embedded in an interfilamentous matrix, consisting of hair keratin-associated proteins (KRTAP), which are essential for the formation of a rigid and resistant hair shaft through their extensive disulfide bond cross-linking with abundant cysteine residues of hair keratins. The matrix proteins include the high-sulfur and high-glycine-tyrosine keratins. In Homo sapiens (Human), this protein is Small cysteine and glycine repeat-containing protein 9.